A 175-amino-acid polypeptide reads, in one-letter code: Large ribosomal subunit protein uL10 (175 aa).

Belongs to the universal ribosomal protein uL10 family. Part of the ribosomal stalk of the 50S ribosomal subunit. The N-terminus interacts with L11 and the large rRNA to form the base of the stalk. The C-terminus forms an elongated spine to which L12 dimers bind in a sequential fashion forming a multimeric L10(L12)X complex.

Its function is as follows. Forms part of the ribosomal stalk, playing a central role in the interaction of the ribosome with GTP-bound translation factors. The protein is Large ribosomal subunit protein uL10 of Prochlorococcus marinus (strain MIT 9211).